The following is a 108-amino-acid chain: Tetrahydromethanopterin S-methyltransferase subunit B (108 aa).

A helical membrane pass occupies residues 80 to 100 (AFYGIVVGLAFSGLLALIIFI).

Belongs to the MtrB family. In terms of assembly, the complex is composed of 8 subunits; MtrA, MtrB, MtrC, MtrD, MtrE, MtrF, MtrG and MtrH.

It localises to the cell membrane. The enzyme catalyses 5-methyl-5,6,7,8-tetrahydromethanopterin + coenzyme M + 2 Na(+)(in) = 5,6,7,8-tetrahydromethanopterin + methyl-coenzyme M + 2 Na(+)(out). The protein operates within one-carbon metabolism; methanogenesis from CO(2); methyl-coenzyme M from 5,10-methylene-5,6,7,8-tetrahydromethanopterin: step 2/2. Functionally, part of a complex that catalyzes the formation of methyl-coenzyme M and tetrahydromethanopterin from coenzyme M and methyl-tetrahydromethanopterin. This is an energy-conserving, sodium-ion translocating step. This is Tetrahydromethanopterin S-methyltransferase subunit B from Methanosarcina acetivorans (strain ATCC 35395 / DSM 2834 / JCM 12185 / C2A).